Consider the following 154-residue polypeptide: Large ribosomal subunit protein uL13 (154 aa).

This sequence belongs to the universal ribosomal protein uL13 family. As to quaternary structure, part of the 50S ribosomal subunit.

Its function is as follows. This protein is one of the early assembly proteins of the 50S ribosomal subunit, although it is not seen to bind rRNA by itself. It is important during the early stages of 50S assembly. The sequence is that of Large ribosomal subunit protein uL13 from Rhodospirillum centenum (strain ATCC 51521 / SW).